Here is a 304-residue protein sequence, read N- to C-terminus: Non-specific ribonucleoside hydrolase RihC (304 aa).

The active site involves His233.

Belongs to the IUNH family. RihC subfamily.

Its function is as follows. Hydrolyzes both purine and pyrimidine ribonucleosides with a broad-substrate specificity. This Escherichia fergusonii (strain ATCC 35469 / DSM 13698 / CCUG 18766 / IAM 14443 / JCM 21226 / LMG 7866 / NBRC 102419 / NCTC 12128 / CDC 0568-73) protein is Non-specific ribonucleoside hydrolase RihC.